A 479-amino-acid polypeptide reads, in one-letter code: Ribosomal RNA small subunit methyltransferase F (479 aa).

S-adenosyl-L-methionine contacts are provided by residues 125-131, E149, D176, and D194; that span reads AAAPGSK. C247 acts as the Nucleophile in catalysis.

The protein belongs to the class I-like SAM-binding methyltransferase superfamily. RsmB/NOP family.

Its subcellular location is the cytoplasm. It carries out the reaction cytidine(1407) in 16S rRNA + S-adenosyl-L-methionine = 5-methylcytidine(1407) in 16S rRNA + S-adenosyl-L-homocysteine + H(+). Specifically methylates the cytosine at position 1407 (m5C1407) of 16S rRNA. The chain is Ribosomal RNA small subunit methyltransferase F from Salmonella enteritidis PT4 (strain P125109).